Reading from the N-terminus, the 206-residue chain is Apoptosis regulator OPG045 (206 aa).

The protein belongs to the orthopoxvirus OPG045 family. In terms of assembly, homodimer. Interacts with host pro-apoptotic protein BCL2L11 (via BH3 domain). Interacts with host NLRP1. Interacts with host BAK.

The protein localises to the host mitochondrion outer membrane. The protein resides in the host cytoplasm. Functionally, plays a role in evading host innate immune response by inhibiting host inflammasome activation. Interacts with and inhibits NLR-mediated interleukin-1 beta/IL1B production in infected cells. At the host mitochondria outer membrane, interacts with the BH3 domain of host BAK and prevents BAK from binding active BAX. In turn, host apoptosis is inhibited. This chain is Apoptosis regulator OPG045 (OPG045), found in Vaccinia virus (strain L-IVP) (VACV).